The sequence spans 454 residues: UPF0210 protein Mhun_2657 (454 aa).

It belongs to the UPF0210 family.

The polypeptide is UPF0210 protein Mhun_2657 (Methanospirillum hungatei JF-1 (strain ATCC 27890 / DSM 864 / NBRC 100397 / JF-1)).